Consider the following 278-residue polypeptide: MLSKRGLNPVQAESRKKKKREQIKVREERAKRHEERLSHRNMSQMERQLSELTQLESSQALNAHDKQLLQNLQRDMAIMKKKNIHGHRVGRVESDKTKEAERQHKPRKPFIPKNPKRSIYYDPIFNPYGVPPPGMPYREKEELSSETDESVIDIPLPSEEYPFEDPKPREKKNKSFKPKHHKKQDINASSAQPKSTTTTEAAANTKDIEEETMIEYSAQPVVRDLRQEAAQFLPAAFQRQKLAKGQKIGQPDRDVSSQVQEDKDEEIDNFYKEIGGYL.

Disordered regions lie at residues 1–43 (MLSK…RNMS), 81–210 (KKNI…DIEE), and 240–264 (QKLAKGQKIGQPDRDVSSQVQEDKD). 2 stretches are compositionally biased toward basic and acidic residues: residues 22–38 (QIKVREERAKRHEERLS) and 90–103 (GRVESDKTKEAERQ). 2 stretches are compositionally biased toward basic residues: residues 104 to 116 (HKPRKPFIPKNPK) and 169 to 183 (REKKNKSFKPKHHKK). Positions 186–202 (INASSAQPKSTTTTEAA) are enriched in polar residues.

The protein localises to the nucleus. The protein resides in the nucleolus. The protein is Protein saf1 (saf1) of Schizosaccharomyces pombe (strain 972 / ATCC 24843) (Fission yeast).